Reading from the N-terminus, the 642-residue chain is Uromodulin (642 aa).

The first 24 residues, 1-24, serve as a signal peptide directing secretion; it reads MGIPLTWMLLVMMVTSWFTLAEAS. Asparagine 25 and asparagine 38 each carry an N-linked (GlcNAc...) asparagine glycan. Positions 28-64 constitute an EGF-like 1 domain; that stretch reads EARRCSECHNNATCTVDGVVTTCSCQTGFTGDGLVCE. Disulfide bonds link cysteine 32–cysteine 41, cysteine 35–cysteine 50, cysteine 52–cysteine 63, cysteine 69–cysteine 82, cysteine 77–cysteine 91, cysteine 93–cysteine 105, cysteine 111–cysteine 125, cysteine 119–cysteine 134, cysteine 136–cysteine 147, cysteine 149–cysteine 160, cysteine 154–cysteine 171, cysteine 175–cysteine 268, cysteine 196–cysteine 283, cysteine 218–cysteine 256, cysteine 224–cysteine 288, cysteine 249–cysteine 257, cysteine 298–cysteine 307, cysteine 301–cysteine 316, cysteine 318–cysteine 348, cysteine 336–cysteine 426, and cysteine 367–cysteine 390. An EGF-like 2; calcium-binding domain is found at 65–106; it reads DMDECATPWTHNCSNSSCVNTPGSFKCSCQDGFRLTPELSCT. N-linked (GlcNAc...) asparagine glycans are attached at residues asparagine 76 and asparagine 79. Residues 107–148 enclose the EGF-like 3; calcium-binding domain; sequence DVDECSEQGLSNCHALATCVNTEGDYLCVCPEGFTGDGWYCE. Residues 149-172 form a beta hairpin region; that stretch reads CSPGSCEPGLDCLPQGPDGKLVCQ. The segment at 173–292 is D10C; it reads DPCNTYETLT…CNLAYCTDPS (120 aa). N-linked (GlcNAc...) asparagine glycosylation is present at asparagine 233. A glycan (N-linked (GlcNAc...) asparagine) is linked at asparagine 276. Residues 293–324 enclose the EGF-like 4 domain; that stretch reads SVEGTCEECRVDEDCISDNGRWRCQCKQDSNI. Asparagine 323 carries N-linked (GlcNAc...) asparagine glycosylation. Residues 335 to 430 are ZP-N; it reads ECGANDIKMS…RMNFECSYPL (96 aa). A ZP domain is found at 335 to 590; the sequence is ECGANDIKMS…PTCSGTRFRS (256 aa). Residues asparagine 397 and asparagine 448 are each glycosylated (N-linked (GlcNAc...) asparagine). A flexible ZP-N/ZP-C linker; important for secretion and polymerization into filaments region spans residues 431–454; sequence DMKVSLKTSLQPMVSALNISLGGT. The interval 455–465 is internal hydrophobic patch (IHP); sequence GKFTVRMALFQ. The ZP-C stretch occupies residues 455-590; sequence GKFTVRMALF…PTCSGTRFRS (136 aa). Cystine bridges form between cysteine 507–cysteine 567, cysteine 528–cysteine 583, and cysteine 572–cysteine 579. Asparagine 514 carries an N-linked (GlcNAc...) asparagine glycan. The tract at residues 587–590 is essential for cleavage by HPN; it reads RFRS. Residues 599 to 607 form an external hydrophobic patch (EHP); regulates polymerization into filaments region; the sequence is VLNLGPITR. A lipid anchor (GPI-anchor amidated alanine) is attached at alanine 618. A propeptide spans 619–642 (removed in mature form); that stretch reads SSNLRLLSIWLLLFPSATLIFMVQ.

Homodimer that then polymerizes into long filaments. The filaments can additionally assemble laterally to form a sheet. The filaments consist of a zigzag-shaped backbone with laterally protruding arms which interact with bacterial adhesin fimH. Two fimH molecules can bind to a single UMOD monomer. Post-translationally, N-glycosylated. Proteolytically cleaved at a conserved C-terminal proteolytic cleavage site to generate the secreted form found in urine. This cleavage is catalyzed by HPN. As to expression, detected in urine (secreted form). Detected in kidney thick ascending limb epithelial cells (at protein level).

It localises to the secreted. The protein resides in the apical cell membrane. The protein localises to the basolateral cell membrane. It is found in the cell projection. Its subcellular location is the cilium membrane. In terms of biological role, functions in biogenesis and organization of the apical membrane of epithelial cells of the thick ascending limb of Henle's loop (TALH), where it promotes formation of complex filamentous gel-like structure that may play a role in the water barrier permeability. May serve as a receptor for binding and endocytosis of cytokines (IL-1, IL-2) and TNF. Facilitates neutrophil migration across renal epithelia. Its function is as follows. In the urine, may contribute to colloid osmotic pressure, retards passage of positively charged electrolytes and inhibits formation of liquid containing supersaturated salts and subsequent formation of salt crystals. Protects against urinary tract infections by binding to type 1 fimbriated E.coli. Binds to the bacterial adhesin fimH which mediates the stable formation of bacterial aggregates, prevents the binding of E.coli to uroplakins UPK1A and UPK1B which act as urothelial receptors for type I fimbriae, and allows for pathogen clearance through micturation. Also promotes aggregation of other bacteria including K.pneumoniae, P.aeruginosa and S.mitis and so may also protect against other uropathogens. The sequence is that of Uromodulin (Umod) from Mus musculus (Mouse).